A 251-amino-acid chain; its full sequence is Methionine aminopeptidase (251 aa).

Position 76 (His76) interacts with substrate. A divalent metal cation is bound by residues Asp93, Asp104, and His168. His175 is a substrate binding site. Glu202 and Glu233 together coordinate a divalent metal cation.

It belongs to the peptidase M24A family. Methionine aminopeptidase type 1 subfamily. Monomer. It depends on Co(2+) as a cofactor. Zn(2+) is required as a cofactor. Requires Mn(2+) as cofactor. Fe(2+) serves as cofactor.

The enzyme catalyses Release of N-terminal amino acids, preferentially methionine, from peptides and arylamides.. Removes the N-terminal methionine from nascent proteins. The N-terminal methionine is often cleaved when the second residue in the primary sequence is small and uncharged (Met-Ala-, Cys, Gly, Pro, Ser, Thr, or Val). Requires deformylation of the N(alpha)-formylated initiator methionine before it can be hydrolyzed. The polypeptide is Methionine aminopeptidase (Staphylococcus epidermidis (strain ATCC 35984 / DSM 28319 / BCRC 17069 / CCUG 31568 / BM 3577 / RP62A)).